Consider the following 213-residue polypeptide: Orotate phosphoribosyltransferase (213 aa).

Lys-26 lines the 5-phospho-alpha-D-ribose 1-diphosphate pocket. Residue 34-35 (FF) participates in orotate binding. Residues 72-73 (YK), Arg-99, Lys-100, Lys-103, His-105, and 124-132 (DDVITAGTA) each bind 5-phospho-alpha-D-ribose 1-diphosphate. Thr-128 and Arg-156 together coordinate orotate.

It belongs to the purine/pyrimidine phosphoribosyltransferase family. PyrE subfamily. In terms of assembly, homodimer. Mg(2+) is required as a cofactor.

The catalysed reaction is orotidine 5'-phosphate + diphosphate = orotate + 5-phospho-alpha-D-ribose 1-diphosphate. The protein operates within pyrimidine metabolism; UMP biosynthesis via de novo pathway; UMP from orotate: step 1/2. Functionally, catalyzes the transfer of a ribosyl phosphate group from 5-phosphoribose 1-diphosphate to orotate, leading to the formation of orotidine monophosphate (OMP). This Shigella sonnei (strain Ss046) protein is Orotate phosphoribosyltransferase.